We begin with the raw amino-acid sequence, 312 residues long: Malate dehydrogenase (312 aa).

Residues Gly-7–Gly-13 and Asp-34 contribute to the NAD(+) site. Substrate-binding residues include Arg-81 and Arg-87. NAD(+) is bound by residues Asn-94 and Ile-117 to Asn-119. Substrate contacts are provided by Asn-119 and Arg-153. His-177 serves as the catalytic Proton acceptor. Met-227 serves as a coordination point for NAD(+).

Belongs to the LDH/MDH superfamily. MDH type 1 family. In terms of assembly, homodimer.

It catalyses the reaction (S)-malate + NAD(+) = oxaloacetate + NADH + H(+). Catalyzes the reversible oxidation of malate to oxaloacetate. The protein is Malate dehydrogenase of Salmonella dublin (strain CT_02021853).